A 2090-amino-acid polypeptide reads, in one-letter code: Nuclear pore complex protein Nup214 (2090 aa).

Gly2 is subject to N-acetylglycine. The residue at position 30 (Ser30) is a Phosphoserine. Blade repeat units lie at residues 41 to 93 (LLAV…PMKF), 94 to 150 (PIHH…DAGG), 151 to 193 (MVID…PSTV), 194 to 239 (AVTS…ESDH), 240 to 303 (PVRV…ERQH), 304 to 359 (HYYL…KSDD), and 360 to 404 (SLPM…FYMI). The seven-bladed beta propeller stretch occupies residues 41–404 (LLAVSNKYGL…DGVLCPFYMI (364 aa)). The segment at 236–1418 (ESDHPVRVLD…AVFGSLPVTS (1183 aa)) is 44 X 2 AA repeats of F-G. Phosphothreonine is present on Thr416. Residues Ser421, Ser430, and Ser433 each carry the phosphoserine modification. Residues 422–460 (LEGERQPKSPGSTPTTPTSSQAPQKLDASAAAAPASLPP) form a disordered region. Low complexity predominate over residues 429-441 (KSPGSTPTTPTSS). Residues Thr434, Thr437, and Thr439 each carry the phosphothreonine modification. Positions 450–586 (SAAAAPASLP…PPSTSAVKVN (137 aa)) are (Microbial infection) Binds human adenovirus 5 (HAdV-5) protein L3 (hexon). The segment at 481 to 2076 (VFSFGSSSLK…GSGTGGFSFG (1596 aa)) is 11 X 5 AA approximate repeats. Copy 1 of the repeat occupies 484–485 (FG). Composition is skewed to low complexity over residues 489–513 (LKSS…KAAP) and 524–536 (PPSK…TPAA). Residues 489 to 536 (LKSSATVTGEPPSYSSGSDSSKAAPGPGPSTFSFVPPSKASLAPTPAA) form a disordered region. Repeat 2 spans residues 548–549 (FG). Low complexity-rich tracts occupy residues 597 to 629 (STPV…HPTP) and 637 to 658 (VPLK…SSSP). A disordered region spans residues 597-700 (STPVSSSQSA…KQGHQWKDSD (104 aa)). Phosphoserine occurs at positions 651, 657, and 666. Phosphothreonine is present on Thr670. The residue at position 678 (Ser678) is a Phosphoserine. A coiled-coil region spans residues 680–1209 (QAKSLQPAVA…VTSTPSASGQ (530 aa)). Residues 691-700 (KQGHQWKDSD) show a composition bias toward basic and acidic residues. Leucine-zipper regions lie at residues 740 to 768 (LRTE…ISSL) and 861 to 882 (LANN…VDSL). The residue at position 760 (Ser760) is a Phosphoserine. A phosphoserine mark is found at Ser940, Ser970, Ser974, and Ser989. The tract at residues 987-1009 (TSSVSQSLESEDARTSCKDDEAV) is disordered. The segment covering 997 to 1007 (EDARTSCKDDE) has biased composition (basic and acidic residues). Phosphothreonine is present on Thr1021. Phosphoserine is present on residues Ser1023, Ser1045, Ser1056, and Ser1081. Over residues 1128-1149 (LKNNPATPSTAMGSSVPYSTAK) the composition is skewed to polar residues. Positions 1128–1152 (LKNNPATPSTAMGSSVPYSTAKTPH) are disordered. Thr1134, Thr1150, and Thr1156 each carry phosphothreonine. Composition is skewed to polar residues over residues 1168–1188 (LINS…SSGD) and 1199–1213 (AVTS…FSKP). The tract at residues 1168-1213 (LINSLKPSGPTPASGQLSSGDKASGTAKIETAVTSTPSASGQFSKP) is disordered. At Ser1181 the chain carries Phosphoserine. Repeat unit 3 spans residues 1225 to 1226 (FG). Composition is skewed to polar residues over residues 1234-1254 (SNFT…QPDA) and 1273-1285 (PPSG…NTTP). 2 disordered regions span residues 1234 to 1316 (SNFT…PPSK) and 1337 to 1408 (LRVG…TSST). Over residues 1288–1299 (PAASSSRPVAPS) the composition is skewed to low complexity. The span at 1301-1310 (TALSTTSSKL) shows a compositional bias: polar residues. Thr1312 is modified (phosphothreonine). Positions 1347–1368 (KPTNKASSTSLTSTQPTKTSGV) are enriched in polar residues. Ser1353 is subject to Phosphoserine. Low complexity predominate over residues 1386–1408 (PPVTSSATTTSVAPPAATSTSST). The segment at 1409–2084 (AVFGSLPVTS…FGSNNSSVQG (676 aa)) is 18 X 4 AA approximate repeats. 4 repeat units span residues 1411–1412 (FG), 1427–1428 (FG), 1441–1442 (FG), and 1473–1474 (FG). The 11 X 3 AA approximate repeats stretch occupies residues 1427 to 2085 (FGGTSLSAGK…GSNNSSVQGF (659 aa)). The span at 1438 to 1450 (SFSFGSQQTNSTV) shows a compositional bias: polar residues. The interval 1438–1467 (SFSFGSQQTNSTVPPSAPPPTTAATPLPTS) is disordered. Low complexity-rich tracts occupy residues 1479-1489 (SATTPSLPMSA) and 1508-1527 (SEVS…AQLP). Residues 1479-1539 (SATTPSLPMS…PPQTSDSVKK (61 aa)) form a disordered region. A Glycyl lysine isopeptide (Lys-Gly) (interchain with G-Cter in SUMO2) cross-link involves residue Lys1538. 18 tandem repeats follow at residues 1635–1636 (FG), 1674–1675 (FG), 1686–1687 (FG), 1713–1714 (FG), 1721–1722 (FG), 1726–1727 (FG), 1732–1733 (FG), 1756–1757 (FG), 1772–1773 (FG), 1786–1787 (FG), 1798–1799 (FG), 1806–1807 (FG), 1812–1813 (FG), 1819–1820 (FG), 1842–1843 (FG), 1851–1852 (FG), 1862–1863 (FG), and 1874–1875 (FG). The tract at residues 1884–1903 (GFFSGLGGKPSQDAANKNPF) is disordered. 5 tandem repeats follow at residues 1910–1911 (FG), 1922–1923 (FG), 1930–1931 (FG), 1938–1939 (FG), and 1959–1960 (FG). Ser1963 is modified (phosphoserine). 3 repeat units span residues 1970–1971 (FG), 1976–1977 (FG), and 1982–1983 (FG). Ser1985 bears the Phosphoserine mark. 11 consecutive repeat copies span residues 1988 to 1989 (FG), 1994 to 1995 (FG), 2012 to 2013 (FG), 2024 to 2025 (FG), 2026 to 2027 (FG), 2035 to 2036 (FG), 2046 to 2047 (FG), 2056 to 2057 (FG), 2066 to 2067 (FG), 2075 to 2076 (FG), and 2085 to 2086 (FG).

In terms of assembly, homodimer. Part of the nuclear pore complex (NPC). Interacts with NUP88. Interacts with ZFP36; this interaction increases upon lipopolysaccharide (LPS) stimulation. Interacts with DDX19. Interacts with XPO1. Interacts with XPO5. (Microbial infection) Interacts with human herpes virus 1 (HHV-1) protein UL25; this interaction might be essential to the capsid docking onto the host nuclear pore. As to quaternary structure, (Microbial infection) Interacts (via N-terminus) with human adenovirus 5 (HAdV-5) protein L3 (hexon); this interaction might be essential for the release of the virus genome to the nucleus. Probably glycosylated as it reacts with wheat germ agglutinin (WGA). As to expression, expressed in thymus, spleen, bone marrow, kidney, brain and testis, but hardly in all other tissues or in whole embryos during development.

It is found in the nucleus. The protein localises to the nuclear pore complex. Its function is as follows. Part of the nuclear pore complex. Has a critical role in nucleocytoplasmic transport. May serve as a docking site in the receptor-mediated import of substrates across the nuclear pore complex. In terms of biological role, (Microbial infection) Required for capsid disassembly of the human adenovirus 5 (HadV-5) leading to release of the viral genome to the nucleus (in vitro). The protein is Nuclear pore complex protein Nup214 (NUP214) of Homo sapiens (Human).